The primary structure comprises 192 residues: Sarcoplasmic calcium-binding protein, alpha-B and -A chains (192 aa).

Position 1 is an N-acetylalanine (A1). 4 EF-hand domains span residues W4 to I39, I56 to G91, A100 to F135, and A136 to F171. Residues D17, D19, D21, D28, D69, N71, D73, E75, E80, D113, N115, D117, K119, and E124 each coordinate Ca(2+).

SCPs from crayfish, lobster, and shrimp are polymorphic dimers; three isotypes (alpha-alpha, alpha-beta, and beta-beta) have been identified.

Its function is as follows. Like parvalbumins, SCPs seem to be more abundant in fast contracting muscles, but no functional relationship can be established from this distribution. This Penaeus sp. (Penoeid shrimp) protein is Sarcoplasmic calcium-binding protein, alpha-B and -A chains.